A 522-amino-acid polypeptide reads, in one-letter code: Amine oxidase [flavin-containing] (522 aa).

The Cytoplasmic segment spans residues 1–492; it reads MTANAYDVIV…WERNLPSVGG (492 aa). Cys398 is subject to S-8alpha-FAD cysteine. A helical; Anchor for type IV membrane protein transmembrane segment spans residues 493–513; that stretch reads FLKFMGVSSFLAAATAAGLVA. The Mitochondrial intermembrane portion of the chain corresponds to 514 to 522; the sequence is CKKGLLPRC.

The protein belongs to the flavin monoamine oxidase family. In terms of assembly, monomer, homo- or heterodimer (containing two subunits of similar size). Each subunit contains a covalently bound flavin. Enzymatically active as monomer. It depends on FAD as a cofactor. As to expression, strongest expression in brain and intestine, followed by liver, heart and gill. Little expression in spleen, eye or muscle. In brain, highest activity in noradrenergic and serotonergic cell groups and those of the habenulointerpeduncular pathway; moderate levels in dopaminergic cell clusters.

Its subcellular location is the mitochondrion outer membrane. It catalyses the reaction a secondary aliphatic amine + O2 + H2O = a primary amine + an aldehyde + H2O2. The enzyme catalyses a primary methyl amine + O2 + H2O = an aldehyde + H2O2 + NH4(+). It carries out the reaction serotonin + O2 + H2O = (5-hydroxyindol-3-yl)acetaldehyde + H2O2 + NH4(+). The catalysed reaction is 2-phenylethylamine + O2 + H2O = 2-phenylacetaldehyde + H2O2 + NH4(+). It catalyses the reaction tyramine + O2 + H2O = (4-hydroxyphenyl)acetaldehyde + H2O2 + NH4(+). The enzyme catalyses dopamine + O2 + H2O = 3,4-dihydroxyphenylacetaldehyde + H2O2 + NH4(+). It carries out the reaction (R)-adrenaline + O2 + H2O = (R)-3,4-dihydroxymandelaldehyde + methylamine + H2O2. The catalysed reaction is (R)-noradrenaline + O2 + H2O = (R)-3,4-dihydroxymandelaldehyde + H2O2 + NH4(+). It catalyses the reaction kynuramine + O2 + H2O = 3-(2-aminophenyl)-3-oxopropanal + H2O2 + NH4(+). The enzyme catalyses tryptamine + O2 + H2O = indole-3-acetaldehyde + H2O2 + NH4(+). Inhibited by both clorgyline (selective MAOA inhibitor) and deprenyl (selective MAOB inhibitor). Functionally, catalyzes the oxidative deamination of biogenic and xenobiotic amines and has important functions in the metabolism of neuroactive and vasoactive amines in the central nervous system and peripheral tissues. Preferentially oxidizes serotonin and tyramine. Also catalyzes the oxidative deamination of kynuramine to 3-(2-aminophenyl)-3-oxopropanal that can spontaneously condense to 4-hydroxyquinoline. The sequence is that of Amine oxidase [flavin-containing] from Danio rerio (Zebrafish).